Reading from the N-terminus, the 64-residue chain is Large ribosomal subunit protein bL35 (64 aa).

The disordered stretch occupies residues Met-1–Lys-21. The segment covering Ala-10–Lys-21 has biased composition (basic residues).

Belongs to the bacterial ribosomal protein bL35 family.

In Nautilia profundicola (strain ATCC BAA-1463 / DSM 18972 / AmH), this protein is Large ribosomal subunit protein bL35.